A 347-amino-acid polypeptide reads, in one-letter code: UDP-3-O-acylglucosamine N-acyltransferase (347 aa).

The active-site Proton acceptor is histidine 248.

It belongs to the transferase hexapeptide repeat family. LpxD subfamily. As to quaternary structure, homotrimer.

The enzyme catalyses a UDP-3-O-[(3R)-3-hydroxyacyl]-alpha-D-glucosamine + a (3R)-hydroxyacyl-[ACP] = a UDP-2-N,3-O-bis[(3R)-3-hydroxyacyl]-alpha-D-glucosamine + holo-[ACP] + H(+). It participates in bacterial outer membrane biogenesis; LPS lipid A biosynthesis. In terms of biological role, catalyzes the N-acylation of UDP-3-O-acylglucosamine using 3-hydroxyacyl-ACP as the acyl donor. Is involved in the biosynthesis of lipid A, a phosphorylated glycolipid that anchors the lipopolysaccharide to the outer membrane of the cell. The sequence is that of UDP-3-O-acylglucosamine N-acyltransferase from Parasynechococcus marenigrum (strain WH8102).